Reading from the N-terminus, the 186-residue chain is Glutathione peroxidase 7 (186 aa).

An N-terminal signal peptide occupies residues methionine 1–alanine 18. Cysteine 56 is a catalytic residue.

This sequence belongs to the glutathione peroxidase family.

It localises to the secreted. The catalysed reaction is 2 glutathione + H2O2 = glutathione disulfide + 2 H2O. Its function is as follows. It protects esophageal epithelia from hydrogen peroxide-induced oxidative stress. It suppresses acidic bile acid-induced reactive oxygen species (ROS) and protects against oxidative DNA damage and double-strand breaks. The chain is Glutathione peroxidase 7 (Gpx7) from Mus musculus (Mouse).